The chain runs to 228 residues: PKHD-type hydroxylase XAC2942 (228 aa).

A Fe2OG dioxygenase domain is found at 78–180; it reads RIYPPLFNRY…RVACFFWAQS (103 aa). The Fe cation site is built by histidine 96, aspartate 98, and histidine 161. Arginine 171 is a 2-oxoglutarate binding site.

Requires Fe(2+) as cofactor. L-ascorbate serves as cofactor.

The protein is PKHD-type hydroxylase XAC2942 of Xanthomonas axonopodis pv. citri (strain 306).